A 366-amino-acid polypeptide reads, in one-letter code: 3-beta-hydroxysteroid dehydrogenase (366 aa).

Tyr-154 (proton donor) is an active-site residue.

The protein belongs to the 3-beta-HSD family.

The catalysed reaction is testosterone + NAD(+) = androst-4-ene-3,17-dione + NADH + H(+). The enzyme catalyses testosterone + NADP(+) = androst-4-ene-3,17-dione + NADPH + H(+). In terms of biological role, catalyzes the degradation of testosterone into androstenedione. The polypeptide is 3-beta-hydroxysteroid dehydrogenase (Mycolicibacterium neoaurum (Mycobacterium neoaurum)).